The chain runs to 1012 residues: DNA polymerase catalytic subunit (1012 aa).

This sequence belongs to the DNA polymerase type-B family.

It is found in the host nucleus. The enzyme catalyses DNA(n) + a 2'-deoxyribonucleoside 5'-triphosphate = DNA(n+1) + diphosphate. This Human herpesvirus 6A (strain Uganda-1102) (HHV-6 variant A) protein is DNA polymerase catalytic subunit (U38).